We begin with the raw amino-acid sequence, 624 residues long: Probable pectinesterase/pectinesterase inhibitor 47 (624 aa).

The signal sequence occupies residues 1 to 19; the sequence is MQTHSSSLVFLALLCLSWA. The tract at residues 24-88 is disordered; that stretch reads PTRPPSQPPS…PSPLPPNIAC (65 aa). Residues 25 to 84 show a composition bias toward pro residues; sequence TRPPSQPPSHPPIQPSSQPPTQPPSQPPTQPPTQPPSHPPTQPPTPPPSQSPSQPSPLPP. Residues 74 to 236 form a pectinesterase inhibitor 47 region; that stretch reads QSPSQPSPLP…TRLYSVSLGL (163 aa). N225, N330, N369, and N376 each carry an N-linked (GlcNAc...) asparagine glycan. The pectinesterase 47 stretch occupies residues 307-606; that stretch reads AVTVGPYETD…FTVYNFTLGD (300 aa). T385 lines the substrate pocket. N-linked (GlcNAc...) asparagine glycosylation occurs at N387. Q415 serves as a coordination point for substrate. Catalysis depends on D438, which acts as the Proton donor; for pectinesterase activity. C452 and C472 are disulfide-bonded. D459 acts as the Nucleophile; for pectinesterase activity in catalysis. The N-linked (GlcNAc...) asparagine glycan is linked to N505. Substrate contacts are provided by R527 and W529. N-linked (GlcNAc...) asparagine glycosylation is found at N555, N596, and N601.

This sequence in the N-terminal section; belongs to the PMEI family. In the C-terminal section; belongs to the pectinesterase family.

It is found in the secreted. The protein resides in the cell wall. It carries out the reaction [(1-&gt;4)-alpha-D-galacturonosyl methyl ester](n) + n H2O = [(1-&gt;4)-alpha-D-galacturonosyl](n) + n methanol + n H(+). Its pathway is glycan metabolism; pectin degradation; 2-dehydro-3-deoxy-D-gluconate from pectin: step 1/5. Acts in the modification of cell walls via demethylesterification of cell wall pectin. In Arabidopsis thaliana (Mouse-ear cress), this protein is Probable pectinesterase/pectinesterase inhibitor 47 (PME47).